We begin with the raw amino-acid sequence, 663 residues long: DNA ligase (663 aa).

NAD(+) contacts are provided by residues 34–38 (DYEYD), 83–84 (SL), and E114. Catalysis depends on K116, which acts as the N6-AMP-lysine intermediate. The NAD(+) site is built by R137, E171, K286, and K310. Residues C404, C407, C422, and C427 each coordinate Zn(2+). One can recognise a BRCT domain in the interval 585–663 (TVESPLTGKN…ADEFIKLANG (79 aa)).

Belongs to the NAD-dependent DNA ligase family. LigA subfamily. Requires Mg(2+) as cofactor. It depends on Mn(2+) as a cofactor.

The enzyme catalyses NAD(+) + (deoxyribonucleotide)n-3'-hydroxyl + 5'-phospho-(deoxyribonucleotide)m = (deoxyribonucleotide)n+m + AMP + beta-nicotinamide D-nucleotide.. Its function is as follows. DNA ligase that catalyzes the formation of phosphodiester linkages between 5'-phosphoryl and 3'-hydroxyl groups in double-stranded DNA using NAD as a coenzyme and as the energy source for the reaction. It is essential for DNA replication and repair of damaged DNA. The protein is DNA ligase of Brachyspira hyodysenteriae (strain ATCC 49526 / WA1).